Reading from the N-terminus, the 606-residue chain is Granule-bound starch synthase 1, chloroplastic/amyloplastic (606 aa).

The transit peptide at 1–76 (MSALTTSQLA…GSRRFPSVVV (76 aa)) directs the protein to the chloroplast. Residues 29–67 (RHGFQGLKPRSPAGGDASSLSVTTSARATPKQQRSVQRG) form a disordered region. Polar residues predominate over residues 46–66 (SSLSVTTSARATPKQQRSVQR). Lys-97 contacts ADP-alpha-D-glucose.

It belongs to the glycosyltransferase 1 family. Bacterial/plant glycogen synthase subfamily.

The protein localises to the plastid. The protein resides in the chloroplast. It localises to the amyloplast. The enzyme catalyses an NDP-alpha-D-glucose + [(1-&gt;4)-alpha-D-glucosyl](n) = [(1-&gt;4)-alpha-D-glucosyl](n+1) + a ribonucleoside 5'-diphosphate + H(+). The protein operates within glycan biosynthesis; starch biosynthesis. In terms of biological role, required for the synthesis of amylose in endosperm. This Oryza sativa (Rice) protein is Granule-bound starch synthase 1, chloroplastic/amyloplastic (WAXY).